The sequence spans 223 residues: Urease accessory protein UreG (223 aa).

The segment at 1 to 31 (MAKHSHDHTHDHHDRPRRVRKPGEPLRIGVG) is disordered. 32-39 (GPVGSGKT) is a GTP binding site.

Belongs to the SIMIBI class G3E GTPase family. UreG subfamily. In terms of assembly, homodimer. UreD, UreF and UreG form a complex that acts as a GTP-hydrolysis-dependent molecular chaperone, activating the urease apoprotein by helping to assemble the nickel containing metallocenter of UreC. The UreE protein probably delivers the nickel.

It is found in the cytoplasm. Functionally, facilitates the functional incorporation of the urease nickel metallocenter. This process requires GTP hydrolysis, probably effectuated by UreG. In Mycobacterium marinum (strain ATCC BAA-535 / M), this protein is Urease accessory protein UreG.